A 171-amino-acid polypeptide reads, in one-letter code: Transcription antitermination protein NusB (171 aa).

This sequence belongs to the NusB family.

Its function is as follows. Involved in transcription antitermination. Required for transcription of ribosomal RNA (rRNA) genes. Binds specifically to the boxA antiterminator sequence of the ribosomal RNA (rrn) operons. The polypeptide is Transcription antitermination protein NusB (Pelodictyon phaeoclathratiforme (strain DSM 5477 / BU-1)).